A 436-amino-acid chain; its full sequence is Na(+)/H(+) antiporter NhaA 1 (436 aa).

11 helical membrane passes run 35 to 55 (FGGGLLLLGAVIALVWANSPW), 80 to 100 (LATWAADGLLAIFFFVVGLEL), 116 to 136 (ALPVIAAIGGMIVPALIYVGV), 147 to 167 (GWAIPTATDIAFALAVLAVIG), 176 to 196 (AFLLTLAVVDDLLAITVIAIF), 201 to 221 (FKLTPLLLALLPIALFGLLVQ), 226 to 246 (WWWALIPLAVVAWTLVHESGV), 283 to 303 (VSAGFAVPVFAFFAAGVSLRG), 313 to 333 (PIVVGIVAGLVLGKVLGIFGS), 354 to 374 (LLGVSLLAGIGFTVSLLIGEL), and 385 to 405 (VKAAVLTGSLIAALLASIVLI).

The protein belongs to the NhaA Na(+)/H(+) (TC 2.A.33) antiporter family.

It localises to the cell membrane. It catalyses the reaction Na(+)(in) + 2 H(+)(out) = Na(+)(out) + 2 H(+)(in). In terms of biological role, na(+)/H(+) antiporter that extrudes sodium in exchange for external protons. This chain is Na(+)/H(+) antiporter NhaA 1, found in Salinispora tropica (strain ATCC BAA-916 / DSM 44818 / JCM 13857 / NBRC 105044 / CNB-440).